Reading from the N-terminus, the 246-residue chain is Probable hydroxyethylthiazole kinase (246 aa).

Substrate is bound at residue methionine 50. Arginine 125 and threonine 145 together coordinate ATP. Glycine 172 contributes to the substrate binding site.

Belongs to the Thz kinase family. Requires Mg(2+) as cofactor.

The catalysed reaction is 5-(2-hydroxyethyl)-4-methylthiazole + ATP = 4-methyl-5-(2-phosphooxyethyl)-thiazole + ADP + H(+). Its pathway is cofactor biosynthesis; thiamine diphosphate biosynthesis; 4-methyl-5-(2-phosphoethyl)-thiazole from 5-(2-hydroxyethyl)-4-methylthiazole: step 1/1. Functionally, catalyzes the phosphorylation of the hydroxyl group of 4-methyl-5-beta-hydroxyethylthiazole (THZ). The polypeptide is Probable hydroxyethylthiazole kinase (thiM) (Agrobacterium fabrum (strain C58 / ATCC 33970) (Agrobacterium tumefaciens (strain C58))).